The chain runs to 739 residues: MNNPSETSKPSMESGDGNTGTQTNGLDFQKQPVPVGGPISTAQAQAFLGHLHQVQLAGTSLQAAAQSLNVQSKSNEESGDSQQPSQPSQQPSVQAAIPQTQLMLAGGQITGLTLTPAQQQLLLQQAQAQLLAAAVQHSASQQHSAAGATISASAATPMTQIPLSQPIQIAQHLQQLQQQNLNLQQFVLVHPTTNLQPAQFIISQTPQGQQGLLQAQNLLTQLPQQSQANLLQSQPSITLASQPATPTRTIAATPIQPLPQSQSTPKRIDTPSLEEPSDLEELEQFAKTFKQRRIKLGFTQGDVGLAMGKLYGNDFSQTTISRFEALNLSFKNMCKLKPLLEKWLNDAENLSSDSTLSSPSALNSPGQGIEGVNRRRKKRTSIETNIRVALEKSFLENQKPTSEEITMIADQLNMEKEVIRVWFCNRRQKEKRINPPSSGGTSSSPIKAIFPSPTSLVATTPSLVTSSAATTLTVNPVLPLTSPAVTSLSVTGTTETTSNNTATVISTAPPASSAVTSPSLSPSPSASASISEASSASETSTTQTTSTPLSSPLGTSQVMVTASGLQTAAAAALQGAAQLPANASLAAMAAAAGLNPGLMASSQFAAGGALLSLNPGTLGGALSPALMSNSTLATIQALASSGSLPITSLDASGNLVFANAGGTPNIVTAPLFLNPQNLSLLTSNPVSLVSAAAASAGASGPVASLHATSTSAESIQNSLLTVASASGATSTTTTASKAQ.

The span at 1–11 (MNNPSETSKPS) shows a compositional bias: polar residues. Disordered stretches follow at residues 1–39 (MNNP…GGPI), 67–95 (SLNV…SVQA), 253–277 (TPIQ…EEPS), 353–378 (DSTL…RRKK), and 489–553 (SVTG…SSPL). Low complexity predominate over residues 81–95 (SQQPSQPSQQPSVQA). The POU-specific domain occupies 274-348 (EEPSDLEELE…LLEKWLNDAE (75 aa)). The span at 353 to 364 (DSTLSSPSALNS) shows a compositional bias: low complexity. Positions 375–434 (RRKKRTSIETNIRVALEKSFLENQKPTSEEITMIADQLNMEKEVIRVWFCNRRQKEKRIN) form a DNA-binding region, homeobox. The segment covering 489–552 (SVTGTTETTS…QTTSTPLSSP (64 aa)) has biased composition (low complexity).

It belongs to the POU transcription factor family. Class-2 subfamily. Interacts with NR3C1, AR and PGR.

Its subcellular location is the nucleus. Its function is as follows. Transcription factor that binds to the octamer motif (5'-ATTTGCAT-3') and activates the promoters of the genes for some small nuclear RNAs (snRNA) and of genes such as those for histone H2B and immunoglobulins. Modulates transcription transactivation by NR3C1, AR and PGR. In Gallus gallus (Chicken), this protein is POU domain, class 2, transcription factor 1 (POU2F1).